Reading from the N-terminus, the 193-residue chain is dCTP deaminase (193 aa).

DCTP contacts are provided by residues 110-115, Asp-128, 136-138, Tyr-171, Lys-178, and Gln-182; these read RSSLAR and VLE. Residue Glu-138 is the Proton donor/acceptor of the active site. The tract at residues 169 to 193 is disordered; that stretch reads RPYNRRQDAKYKDQQGAVASRIDKD.

This sequence belongs to the dCTP deaminase family. In terms of assembly, homotrimer.

The catalysed reaction is dCTP + H2O + H(+) = dUTP + NH4(+). It functions in the pathway pyrimidine metabolism; dUMP biosynthesis; dUMP from dCTP (dUTP route): step 1/2. Functionally, catalyzes the deamination of dCTP to dUTP. This is dCTP deaminase from Pectobacterium carotovorum subsp. carotovorum (strain PC1).